The sequence spans 361 residues: Deoxyribonuclease (361 aa).

An N-terminal signal peptide occupies residues Met-1 to Ala-24. His-149 is an active-site residue.

The protein belongs to the DNase I family. It depends on Mg(2+) as a cofactor. Requires Ca(2+) as cofactor.

The protein localises to the secreted. Functionally, DNA nuclease able to digest short and long DNA substrate. Is resistant to ionic strength and thus active at high salt concentration. The sequence is that of Deoxyribonuclease from Thioalkalivibrio sp. (strain K90mix).